We begin with the raw amino-acid sequence, 276 residues long: Undecaprenyl-diphosphatase (276 aa).

6 helical membrane passes run Arg43 to Phe63, Leu85 to Ile105, Leu109 to Ala129, Ala183 to Ser203, Val218 to Leu238, and Ile254 to Ala274.

The protein belongs to the UppP family.

The protein resides in the cell inner membrane. It catalyses the reaction di-trans,octa-cis-undecaprenyl diphosphate + H2O = di-trans,octa-cis-undecaprenyl phosphate + phosphate + H(+). In terms of biological role, catalyzes the dephosphorylation of undecaprenyl diphosphate (UPP). Confers resistance to bacitracin. This is Undecaprenyl-diphosphatase from Pseudomonas syringae pv. tomato (strain ATCC BAA-871 / DC3000).